Reading from the N-terminus, the 173-residue chain is Bifunctional protein PyrR (173 aa).

Residues 40–41, 97–105, and arginine 130 each bind substrate; these read TR and DDVLYTGRT. The PRPP-binding motif lies at 93–105; the sequence is VILIDDVLYTGRT.

This sequence belongs to the purine/pyrimidine phosphoribosyltransferase family. PyrR subfamily. Homodimer and homohexamer; in equilibrium.

The catalysed reaction is UMP + diphosphate = 5-phospho-alpha-D-ribose 1-diphosphate + uracil. Its function is as follows. Regulates transcriptional attenuation of the pyrimidine nucleotide (pyr) operon by binding in a uridine-dependent manner to specific sites on pyr mRNA. This disrupts an antiterminator hairpin in the RNA and favors formation of a downstream transcription terminator, leading to a reduced expression of downstream genes. Functionally, also displays a weak uracil phosphoribosyltransferase activity which is not physiologically significant. The polypeptide is Bifunctional protein PyrR (Streptococcus pyogenes serotype M6 (strain ATCC BAA-946 / MGAS10394)).